Reading from the N-terminus, the 449-residue chain is Glutathione reductase (449 aa).

FAD-binding residues include Ser15, Gly16, Glu35, Thr42, Cys43, and Lys51. Ser15 serves as a coordination point for glutathione. The cysteines at positions 43 and 48 are disulfide-linked. Tyr99 contacts glutathione. Ala115 serves as a coordination point for FAD. Gly175, Ile178, Glu181, Arg198, Arg204, and Gly261 together coordinate NADP(+). Asp302 and Thr310 together coordinate FAD. Ala340 provides a ligand contact to NADP(+). His435 provides a ligand contact to FAD. The Proton acceptor role is filled by His435.

This sequence belongs to the class-I pyridine nucleotide-disulfide oxidoreductase family. Homodimer. FAD serves as cofactor.

The protein resides in the cytoplasm. It carries out the reaction 2 glutathione + NADP(+) = glutathione disulfide + NADPH + H(+). Its pathway is xenobiotic degradation; (2,4,5-trichlorophenoxy)acetate degradation. Catalyzes the reduction of glutathione disulfide (GSSG) to reduced glutathione (GSH). Constitutes the major mechanism to maintain a high GSH:GSSG ratio in the cytosol. This is Glutathione reductase (gor) from Burkholderia cepacia (Pseudomonas cepacia).